A 152-amino-acid chain; its full sequence is Transcriptional regulator MraZ (152 aa).

SpoVT-AbrB domains follow at residues 5–52 and 81–124; these read ATLV…PLPE and ASEC…DETT.

This sequence belongs to the MraZ family. In terms of assembly, forms oligomers.

It localises to the cytoplasm. Its subcellular location is the nucleoid. Its function is as follows. Negatively regulates its own expression and that of the subsequent genes in the proximal part of the division and cell wall (dcw) gene cluster. Acts by binding directly to DNA. May also regulate the expression of genes outside the dcw cluster. The polypeptide is Transcriptional regulator MraZ (Citrobacter koseri (strain ATCC BAA-895 / CDC 4225-83 / SGSC4696)).